The sequence spans 365 residues: 25S rRNA (uridine(2843)-N(3))-methyltransferase (365 aa).

The protein belongs to the class I-like SAM-binding methyltransferase superfamily.

It localises to the cytoplasm. The protein resides in the nucleus. The catalysed reaction is uridine(2843) in 25S rRNA + S-adenosyl-L-methionine = N(3)-methyluridine(2843) in 25S rRNA + S-adenosyl-L-homocysteine + H(+). In terms of biological role, S-adenosyl-L-methionine-dependent methyltransferase that specifically methylates the N(3) position of uridine 2843 (m3U2843) in 25S rRNA. This chain is 25S rRNA (uridine(2843)-N(3))-methyltransferase (BMT6), found in Saccharomyces cerevisiae (strain ATCC 204508 / S288c) (Baker's yeast).